The following is a 445-amino-acid chain: tRNA modification GTPase MnmE (445 aa).

Positions 20, 79, and 119 each coordinate (6S)-5-formyl-5,6,7,8-tetrahydrofolate. A TrmE-type G domain is found at 215–371; it reads GLKLAIIGPP…ILKNIENIAE (157 aa). A K(+)-binding site is contributed by Asn225. GTP-binding positions include 225-230, 244-250, and 269-272; these read NVGKSS, SNIAGTT, and DTAG. Ser229 serves as a coordination point for Mg(2+). K(+) is bound by residues Ser244, Ile246, and Thr249. Residue Thr250 coordinates Mg(2+). Residue Lys445 participates in (6S)-5-formyl-5,6,7,8-tetrahydrofolate binding.

This sequence belongs to the TRAFAC class TrmE-Era-EngA-EngB-Septin-like GTPase superfamily. TrmE GTPase family. In terms of assembly, homodimer. Heterotetramer of two MnmE and two MnmG subunits. It depends on K(+) as a cofactor.

The protein localises to the cytoplasm. Its function is as follows. Exhibits a very high intrinsic GTPase hydrolysis rate. Involved in the addition of a carboxymethylaminomethyl (cmnm) group at the wobble position (U34) of certain tRNAs, forming tRNA-cmnm(5)s(2)U34. This chain is tRNA modification GTPase MnmE, found in Rickettsia conorii (strain ATCC VR-613 / Malish 7).